The sequence spans 494 residues: Alpha-amylase-related protein (494 aa).

A signal peptide spans 1–20 (MIKFALALTLCLAGASLSLA). At Gln21 the chain carries Pyrrolidone carboxylic acid. The cysteines at positions 48 and 104 are disulfide-linked. Ca(2+)-binding residues include Asn118, Gln169, and Asp178. A disulfide bridge links Cys157 with Cys171. Arg206 is a binding site for chloride. The Nucleophile role is filled by Asp208. Ca(2+) is bound at residue His212. Glu245 serves as the catalytic Proton donor. The chloride site is built by Asn308 and Arg343. Cystine bridges form between Cys376/Cys382, Cys418/Cys441, and Cys448/Cys460.

The protein belongs to the glycosyl hydrolase 13 family. Monomer. The cofactor is Ca(2+). Chloride is required as a cofactor.

Its subcellular location is the secreted. It carries out the reaction Endohydrolysis of (1-&gt;4)-alpha-D-glucosidic linkages in polysaccharides containing three or more (1-&gt;4)-alpha-linked D-glucose units.. This Drosophila kikkawai (Fruit fly) protein is Alpha-amylase-related protein (Amyrel).